A 137-amino-acid chain; its full sequence is Large ribosomal subunit protein uL16 (137 aa).

The protein belongs to the universal ribosomal protein uL16 family. As to quaternary structure, part of the 50S ribosomal subunit.

Its function is as follows. Binds 23S rRNA and is also seen to make contacts with the A and possibly P site tRNAs. This is Large ribosomal subunit protein uL16 from Xanthobacter autotrophicus (strain ATCC BAA-1158 / Py2).